Reading from the N-terminus, the 243-residue chain is uncharacterized protein (243 aa).

The first 16 residues, 1-16 (MKLLALVALCAVGVAS), serve as a signal peptide directing secretion. N55 is a glycosylation site (N-linked (GlcNAc...) asparagine). 2 disordered regions span residues 95–126 (SQGR…EKPS) and 208–235 (NQQQ…KPTV). 2 stretches are compositionally biased toward low complexity: residues 99-112 (NQQQ…SQGG) and 209-229 (QQQQ…STTL). A disulfide bridge connects residues C141 and C239.

Belongs to the protease inhibitor I33 family.

The protein localises to the secreted. This is an uncharacterized protein from Caenorhabditis elegans.